The following is a 450-amino-acid chain: Methylenetetrahydrofolate--tRNA-(uracil-5-)-methyltransferase TrmFO (450 aa).

Residue 9–14 (GGGMAG) participates in FAD binding.

This sequence belongs to the MnmG family. TrmFO subfamily. The cofactor is FAD.

The protein resides in the cytoplasm. The catalysed reaction is uridine(54) in tRNA + (6R)-5,10-methylene-5,6,7,8-tetrahydrofolate + NADH + H(+) = 5-methyluridine(54) in tRNA + (6S)-5,6,7,8-tetrahydrofolate + NAD(+). The enzyme catalyses uridine(54) in tRNA + (6R)-5,10-methylene-5,6,7,8-tetrahydrofolate + NADPH + H(+) = 5-methyluridine(54) in tRNA + (6S)-5,6,7,8-tetrahydrofolate + NADP(+). Catalyzes the folate-dependent formation of 5-methyl-uridine at position 54 (M-5-U54) in all tRNAs. This is Methylenetetrahydrofolate--tRNA-(uracil-5-)-methyltransferase TrmFO from Roseobacter denitrificans (strain ATCC 33942 / OCh 114) (Erythrobacter sp. (strain OCh 114)).